Consider the following 390-residue polypeptide: Phosphopentomutase (390 aa).

Residues Asp11, Asp283, His288, Asp324, His325, and His336 each coordinate Mn(2+).

It belongs to the phosphopentomutase family. The cofactor is Mn(2+).

The protein resides in the cytoplasm. It catalyses the reaction 2-deoxy-alpha-D-ribose 1-phosphate = 2-deoxy-D-ribose 5-phosphate. The enzyme catalyses alpha-D-ribose 1-phosphate = D-ribose 5-phosphate. Its pathway is carbohydrate degradation; 2-deoxy-D-ribose 1-phosphate degradation; D-glyceraldehyde 3-phosphate and acetaldehyde from 2-deoxy-alpha-D-ribose 1-phosphate: step 1/2. In terms of biological role, isomerase that catalyzes the conversion of deoxy-ribose 1-phosphate (dRib-1-P) and ribose 1-phosphate (Rib-1-P) to deoxy-ribose 5-phosphate (dRib-5-P) and ribose 5-phosphate (Rib-5-P), respectively. The sequence is that of Phosphopentomutase from Clostridium acetobutylicum (strain ATCC 824 / DSM 792 / JCM 1419 / IAM 19013 / LMG 5710 / NBRC 13948 / NRRL B-527 / VKM B-1787 / 2291 / W).